A 270-amino-acid chain; its full sequence is Interleukin-1 beta (270 aa).

Positions 1–118 (MATVPEPTSE…VYDDDAFVCD (118 aa)) are excised as a propeptide.

The protein belongs to the IL-1 family. As to quaternary structure, monomer. In its precursor form, weakly interacts with full-length MEFV; the mature cytokine does not interact at all. Interacts with integrins ITGAV:ITGBV and ITGA5:ITGB1; integrin-binding is required for IL1B signaling. Interacts with cargo receptor TMED10; the interaction is direct and is required for the secretion of IL1B mature form. Interacts with HSP90AB1; the interaction facilitates cargo translocation into the ERGIC. Interacts with HSP90B1; the interaction facilitates cargo translocation into the ERGIC.

The protein localises to the cytoplasm. It localises to the cytosol. The protein resides in the secreted. It is found in the lysosome. Its subcellular location is the extracellular exosome. In terms of biological role, potent pro-inflammatory cytokine. Initially discovered as the major endogenous pyrogen, induces prostaglandin synthesis, neutrophil influx and activation, T-cell activation and cytokine production, B-cell activation and antibody production, and fibroblast proliferation and collagen production. Promotes Th17 differentiation of T-cells. Synergizes with IL12/interleukin-12 to induce IFNG synthesis from T-helper 1 (Th1) cells. Plays a role in angiogenesis by inducing VEGF production synergistically with TNF and IL6. Involved in transduction of inflammation downstream of pyroptosis: its mature form is specifically released in the extracellular milieu by passing through the gasdermin-D (GSDMD) pore. The sequence is that of Interleukin-1 beta (IL1B) from Phoca vitulina richardii (Pacific harbor seal).